Consider the following 376-residue polypeptide: MLTRSDIHQKSRRWVVKIGSALLTNDGRGLNKDAMAQWVSQMVTLRQQGIELVIVSSGSVAEGMQRLGWSQRPSELNELQAAAAVGQMGLVQAYESEFAKNGIHTAQILMTHDDLSNRARYLNASNTIQTLLEHGVVPVINENDTVVTDEIRFGDNDTLAALTANLVSADVLVILTDQNGLYNDNPRTNPNAELISEAQVSRKDIEAMASSEGGSLGKGGMYTKVMAAKRAARSGTATFIASGREDNVLPRLLAGEPLGTLLIPDLEPLTAKKRWLAGHLQAKGQLVLDEGAVKALQSSGKSLLPIGVKGMSGEFQRGEMVVCVNENNQEVARGLVNYPFFETQKIMGHPSSEINQLLGYSDGEFLIHCDNLVLAD.

Lys17 lines the ATP pocket. Residues Ser57, Asp144, and Asn156 each contribute to the substrate site. 176–177 (TD) contributes to the ATP binding site. Positions 283-361 (KGQLVLDEGA…SEINQLLGYS (79 aa)) constitute a PUA domain.

The protein belongs to the glutamate 5-kinase family.

Its subcellular location is the cytoplasm. The enzyme catalyses L-glutamate + ATP = L-glutamyl 5-phosphate + ADP. It participates in amino-acid biosynthesis; L-proline biosynthesis; L-glutamate 5-semialdehyde from L-glutamate: step 1/2. Catalyzes the transfer of a phosphate group to glutamate to form L-glutamate 5-phosphate. The sequence is that of Glutamate 5-kinase from Hydrogenovibrio crunogenus (strain DSM 25203 / XCL-2) (Thiomicrospira crunogena).